Reading from the N-terminus, the 252-residue chain is Chitooligosaccharide deacetylase (252 aa).

The Mg(2+) site is built by His61 and His125.

The protein belongs to the YdjC deacetylase family. ChbG subfamily. Homodimer. It depends on Mg(2+) as a cofactor.

It is found in the cytoplasm. The enzyme catalyses N,N'-diacetylchitobiose + H2O = N-acetyl-beta-D-glucosaminyl-(1-&gt;4)-D-glucosamine + acetate. The catalysed reaction is diacetylchitobiose-6'-phosphate + H2O = N'-monoacetylchitobiose-6'-phosphate + acetate. It participates in glycan degradation; chitin degradation. Involved in the degradation of chitin. ChbG is essential for growth on the acetylated chitooligosaccharides chitobiose and chitotriose but is dispensable for growth on cellobiose and chitosan dimer, the deacetylated form of chitobiose. Deacetylation of chitobiose-6-P and chitotriose-6-P is necessary for both the activation of the chb promoter by the regulatory protein ChbR and the hydrolysis of phosphorylated beta-glucosides by the phospho-beta-glucosidase ChbF. Catalyzes the removal of only one acetyl group from chitobiose-6-P to yield monoacetylchitobiose-6-P, the inducer of ChbR and the substrate of ChbF. In Salmonella paratyphi B (strain ATCC BAA-1250 / SPB7), this protein is Chitooligosaccharide deacetylase.